The primary structure comprises 104 residues: Large ribosomal subunit protein uL24 (104 aa).

The protein belongs to the universal ribosomal protein uL24 family. Part of the 50S ribosomal subunit.

In terms of biological role, one of two assembly initiator proteins, it binds directly to the 5'-end of the 23S rRNA, where it nucleates assembly of the 50S subunit. One of the proteins that surrounds the polypeptide exit tunnel on the outside of the subunit. This chain is Large ribosomal subunit protein uL24, found in Pseudomonas fluorescens (strain SBW25).